We begin with the raw amino-acid sequence, 279 residues long: Nucleotide-binding protein THA_1518 (279 aa).

9–16 serves as a coordination point for ATP; it reads GLSGAGKS. A GTP-binding site is contributed by 57-60; sequence DARS.

Belongs to the RapZ-like family.

Its function is as follows. Displays ATPase and GTPase activities. The sequence is that of Nucleotide-binding protein THA_1518 from Thermosipho africanus (strain TCF52B).